The sequence spans 274 residues: S-adenosylmethionine decarboxylase proenzyme (274 aa).

The Schiff-base intermediate with substrate; via pyruvic acid role is filled by Ser119. At Ser119 the chain carries Pyruvic acid (Ser); by autocatalysis. Residue His124 is the Proton acceptor; for processing activity of the active site. Cys147 acts as the Proton donor; for catalytic activity in catalysis.

The protein belongs to the prokaryotic AdoMetDC family. Type 2 subfamily. In terms of assembly, heterooctamer of four alpha and four beta chains arranged as a tetramer of alpha/beta heterodimers. Pyruvate serves as cofactor. Is synthesized initially as an inactive proenzyme. Formation of the active enzyme involves a self-maturation process in which the active site pyruvoyl group is generated from an internal serine residue via an autocatalytic post-translational modification. Two non-identical subunits are generated from the proenzyme in this reaction, and the pyruvate is formed at the N-terminus of the alpha chain, which is derived from the carboxyl end of the proenzyme. The post-translation cleavage follows an unusual pathway, termed non-hydrolytic serinolysis, in which the side chain hydroxyl group of the serine supplies its oxygen atom to form the C-terminus of the beta chain, while the remainder of the serine residue undergoes an oxidative deamination to produce ammonia and the pyruvoyl group blocking the N-terminus of the alpha chain.

It carries out the reaction S-adenosyl-L-methionine + H(+) = S-adenosyl 3-(methylsulfanyl)propylamine + CO2. The protein operates within amine and polyamine biosynthesis; S-adenosylmethioninamine biosynthesis; S-adenosylmethioninamine from S-adenosyl-L-methionine: step 1/1. Its function is as follows. Catalyzes the decarboxylation of S-adenosylmethionine to S-adenosylmethioninamine (dcAdoMet), the propylamine donor required for the synthesis of the polyamines spermine and spermidine from the diamine putrescine. This Clostridium acetobutylicum (strain ATCC 824 / DSM 792 / JCM 1419 / IAM 19013 / LMG 5710 / NBRC 13948 / NRRL B-527 / VKM B-1787 / 2291 / W) protein is S-adenosylmethionine decarboxylase proenzyme.